Here is a 529-residue protein sequence, read N- to C-terminus: Bifunctional purine biosynthesis protein PurH (529 aa).

The MGS-like domain occupies 1 to 148; that stretch reads MQQPRPVRRA…KNHKDVAIVV (148 aa).

It belongs to the PurH family.

It carries out the reaction (6R)-10-formyltetrahydrofolate + 5-amino-1-(5-phospho-beta-D-ribosyl)imidazole-4-carboxamide = 5-formamido-1-(5-phospho-D-ribosyl)imidazole-4-carboxamide + (6S)-5,6,7,8-tetrahydrofolate. The catalysed reaction is IMP + H2O = 5-formamido-1-(5-phospho-D-ribosyl)imidazole-4-carboxamide. It participates in purine metabolism; IMP biosynthesis via de novo pathway; 5-formamido-1-(5-phospho-D-ribosyl)imidazole-4-carboxamide from 5-amino-1-(5-phospho-D-ribosyl)imidazole-4-carboxamide (10-formyl THF route): step 1/1. Its pathway is purine metabolism; IMP biosynthesis via de novo pathway; IMP from 5-formamido-1-(5-phospho-D-ribosyl)imidazole-4-carboxamide: step 1/1. The protein is Bifunctional purine biosynthesis protein PurH of Cronobacter sakazakii (strain ATCC BAA-894) (Enterobacter sakazakii).